Consider the following 120-residue polypeptide: Aspartate 1-decarboxylase (120 aa).

The active-site Schiff-base intermediate with substrate; via pyruvic acid is serine 25. Serine 25 is subject to Pyruvic acid (Ser). Position 57 (threonine 57) interacts with substrate. The active-site Proton donor is tyrosine 58. 73 to 75 (GAA) contributes to the substrate binding site.

This sequence belongs to the PanD family. In terms of assembly, heterooctamer of four alpha and four beta subunits. The cofactor is pyruvate. Post-translationally, is synthesized initially as an inactive proenzyme, which is activated by self-cleavage at a specific serine bond to produce a beta-subunit with a hydroxyl group at its C-terminus and an alpha-subunit with a pyruvoyl group at its N-terminus.

The protein resides in the cytoplasm. The enzyme catalyses L-aspartate + H(+) = beta-alanine + CO2. It functions in the pathway cofactor biosynthesis; (R)-pantothenate biosynthesis; beta-alanine from L-aspartate: step 1/1. Functionally, catalyzes the pyruvoyl-dependent decarboxylation of aspartate to produce beta-alanine. The polypeptide is Aspartate 1-decarboxylase (Deinococcus deserti (strain DSM 17065 / CIP 109153 / LMG 22923 / VCD115)).